A 329-amino-acid chain; its full sequence is Fructose-1,6-bisphosphatase class 1 (329 aa).

Mg(2+) is bound by residues Glu-84, Asp-103, Leu-105, and Asp-106. Residues 106 to 109, Asn-196, and Lys-262 contribute to the substrate site; that span reads DGSS. A Mg(2+)-binding site is contributed by Glu-268.

This sequence belongs to the FBPase class 1 family. As to quaternary structure, homotetramer. It depends on Mg(2+) as a cofactor.

It localises to the cytoplasm. It catalyses the reaction beta-D-fructose 1,6-bisphosphate + H2O = beta-D-fructose 6-phosphate + phosphate. Its pathway is carbohydrate biosynthesis; gluconeogenesis. This Shewanella pealeana (strain ATCC 700345 / ANG-SQ1) protein is Fructose-1,6-bisphosphatase class 1.